Consider the following 389-residue polypeptide: S-adenosylmethionine synthase (389 aa).

His19 is a binding site for ATP. Asp21 lines the Mg(2+) pocket. Position 47 (Glu47) interacts with K(+). The L-methionine site is built by Glu60 and Gln103. Positions 103–113 are flexible loop; it reads QSGDIAQGVDR. ATP-binding positions include 168–170, 234–235, Asp243, 249–250, Ala266, and Lys270; these read DGK, RF, and RK. Asp243 is an L-methionine binding site. An L-methionine-binding site is contributed by Lys274.

It belongs to the AdoMet synthase family. Homotetramer; dimer of dimers. Requires Mg(2+) as cofactor. K(+) serves as cofactor.

It is found in the cytoplasm. It catalyses the reaction L-methionine + ATP + H2O = S-adenosyl-L-methionine + phosphate + diphosphate. Its pathway is amino-acid biosynthesis; S-adenosyl-L-methionine biosynthesis; S-adenosyl-L-methionine from L-methionine: step 1/1. Its function is as follows. Catalyzes the formation of S-adenosylmethionine (AdoMet) from methionine and ATP. The overall synthetic reaction is composed of two sequential steps, AdoMet formation and the subsequent tripolyphosphate hydrolysis which occurs prior to release of AdoMet from the enzyme. This is S-adenosylmethionine synthase from Nitratidesulfovibrio vulgaris (strain DSM 19637 / Miyazaki F) (Desulfovibrio vulgaris).